The chain runs to 135 residues: Methylglyoxal synthase (135 aa).

The MGS-like domain maps to 1-135 (MQKTLALVAH…GLYERAVPEF (135 aa)). Residues histidine 10, lysine 14, 36–39 (TGTT), and 56–57 (SG) each bind substrate. Aspartate 62 acts as the Proton donor/acceptor in catalysis. Histidine 89 contributes to the substrate binding site.

Belongs to the methylglyoxal synthase family.

The enzyme catalyses dihydroxyacetone phosphate = methylglyoxal + phosphate. Its function is as follows. Catalyzes the formation of methylglyoxal from dihydroxyacetone phosphate. The sequence is that of Methylglyoxal synthase from Pseudoalteromonas atlantica (strain T6c / ATCC BAA-1087).